The chain runs to 247 residues: Probable transcriptional regulatory protein Glov_1245 (247 aa).

This sequence belongs to the TACO1 family.

The protein localises to the cytoplasm. The sequence is that of Probable transcriptional regulatory protein Glov_1245 from Trichlorobacter lovleyi (strain ATCC BAA-1151 / DSM 17278 / SZ) (Geobacter lovleyi).